Consider the following 164-residue polypeptide: Magnesium-dependent phosphatase 1 (164 aa).

Aspartate 11 (nucleophile) is an active-site residue. Residue aspartate 11 coordinates Mg(2+). Phosphate-binding residues include leucine 12 and aspartate 13. Aspartate 13 provides a ligand contact to Mg(2+). The active-site Proton donor is aspartate 13. Tryptophan 20 is a substrate binding site. Positions 69, 70, and 100 each coordinate phosphate. Residue arginine 70 coordinates substrate. Residue aspartate 123 participates in Mg(2+) binding.

The protein belongs to the HAD-like hydrolase superfamily. It depends on Mg(2+) as a cofactor.

It catalyses the reaction O-phospho-L-tyrosyl-[protein] + H2O = L-tyrosyl-[protein] + phosphate. Inhibited by vanadate and zinc, and slightly by calcium. Its function is as follows. Magnesium-dependent phosphatase which may act as a tyrosine phosphatase. The sequence is that of Magnesium-dependent phosphatase 1 (Mdp1) from Mus musculus (Mouse).